A 158-amino-acid polypeptide reads, in one-letter code: GAF domain-containing protein A (158 aa).

The GAF domain occupies 32 to 158; sequence NQIANLANVT…LTQILKLLDN (127 aa).

The protein belongs to the free Met sulfoxide reductase family.

The sequence is that of GAF domain-containing protein A (gafA) from Dictyostelium discoideum (Social amoeba).